The following is a 483-amino-acid chain: PRAME family member 12 (483 aa).

An LRR 1; degenerate repeat occupies 97–122 (RWKLQVLDLRNVDENFWGIWSGASAL). Residues 177–201 (HVCCKELQIFGIAIHRIIEVLNTVE) form an LRR 2; degenerate repeat. An LRR 3; degenerate repeat occupies 202 to 228 (LDCIQEVEVCCPWELSILIRFAPYLGQ). Residues 229 to 264 (MRNLRKLVLFNIHVSACIPLDRKEQFVIQFTSQFLK) form an LRR 4; degenerate repeat. LRR repeat units follow at residues 265 to 290 (LDYF…LRCL), 291 to 322 (QAPL…RQLK), 323 to 341 (ELDL…PLSV), 347 to 374 (EATL…ALSR), and 375 to 399 (CSQL…LLRH).

This sequence belongs to the PRAME family.

This is PRAME family member 12 from Homo sapiens (Human).